The primary structure comprises 202 residues: Ribonuclease HII (202 aa).

Positions leucine 12 to glutamate 201 constitute an RNase H type-2 domain. A divalent metal cation contacts are provided by aspartate 18, glutamate 19, and aspartate 110.

This sequence belongs to the RNase HII family. The cofactor is Mn(2+). Mg(2+) serves as cofactor.

It localises to the cytoplasm. The catalysed reaction is Endonucleolytic cleavage to 5'-phosphomonoester.. Functionally, endonuclease that specifically degrades the RNA of RNA-DNA hybrids. This Coxiella burnetii (strain CbuK_Q154) (Coxiella burnetii (strain Q154)) protein is Ribonuclease HII.